Consider the following 662-residue polypeptide: UvrABC system protein B (662 aa).

The Helicase ATP-binding domain occupies 25 to 182 (KGIEKGEKFQ…KKLVEIQYER (158 aa)). 38–45 (GVTGSGKT) lines the ATP pocket. A Beta-hairpin motif is present at residues 91-114 (YYDYYQPEAYVAQSDTYIEKDASI). The Helicase C-terminal domain occupies 429-595 (QIDDLYTSIQ…TIIKDIREVI (167 aa)). The 36-residue stretch at 622–657 (DKLIEKYEEEMREAAQNLQFEKAAHLRDVIYKLKRD) folds into the UVR domain.

The protein belongs to the UvrB family. Forms a heterotetramer with UvrA during the search for lesions. Interacts with UvrC in an incision complex.

It is found in the cytoplasm. Functionally, the UvrABC repair system catalyzes the recognition and processing of DNA lesions. A damage recognition complex composed of 2 UvrA and 2 UvrB subunits scans DNA for abnormalities. Upon binding of the UvrA(2)B(2) complex to a putative damaged site, the DNA wraps around one UvrB monomer. DNA wrap is dependent on ATP binding by UvrB and probably causes local melting of the DNA helix, facilitating insertion of UvrB beta-hairpin between the DNA strands. Then UvrB probes one DNA strand for the presence of a lesion. If a lesion is found the UvrA subunits dissociate and the UvrB-DNA preincision complex is formed. This complex is subsequently bound by UvrC and the second UvrB is released. If no lesion is found, the DNA wraps around the other UvrB subunit that will check the other stand for damage. This chain is UvrABC system protein B, found in Clostridium botulinum (strain 657 / Type Ba4).